We begin with the raw amino-acid sequence, 154 residues long: Sec-independent protein translocase protein TatB (154 aa).

A helical transmembrane segment spans residues Met1 to Gly21.

The protein belongs to the TatB family. As to quaternary structure, the Tat system comprises two distinct complexes: a TatABC complex, containing multiple copies of TatA, TatB and TatC subunits, and a separate TatA complex, containing only TatA subunits. Substrates initially bind to the TatABC complex, which probably triggers association of the separate TatA complex to form the active translocon.

It is found in the cell inner membrane. In terms of biological role, part of the twin-arginine translocation (Tat) system that transports large folded proteins containing a characteristic twin-arginine motif in their signal peptide across membranes. Together with TatC, TatB is part of a receptor directly interacting with Tat signal peptides. TatB may form an oligomeric binding site that transiently accommodates folded Tat precursor proteins before their translocation. The sequence is that of Sec-independent protein translocase protein TatB from Albidiferax ferrireducens (strain ATCC BAA-621 / DSM 15236 / T118) (Rhodoferax ferrireducens).